Consider the following 86-residue polypeptide: Putative defensin-like protein 244 (86 aa).

The signal sequence occupies residues 1–22 (MKGIAMLLVSCLLFSFLSTNLA). Disulfide bonds link cysteine 28-cysteine 83, cysteine 38-cysteine 67, cysteine 48-cysteine 77, and cysteine 65-cysteine 79.

This sequence belongs to the DEFL family.

It localises to the secreted. The chain is Putative defensin-like protein 244 (SCRL11) from Arabidopsis thaliana (Mouse-ear cress).